A 536-amino-acid chain; its full sequence is GATA zinc finger domain-containing protein 9 (536 aa).

Polar residues-rich tracts occupy residues 1-20 (MTSFLLFNPGSLQQQQQPHS) and 36-55 (CQSSFSTPLGGSNGINNPNA). Disordered stretches follow at residues 1–77 (MTSF…LSGS), 183–211 (SSSLSSEDDDCCYETEEDDNGEDGEVVRS), 237–258 (RSAFKKNKKDYHHGSSAGGGGS), 273–342 (QLHY…GFVQ), and 370–423 (ALFS…NISS). Residues 56–72 (TTNNTTTTTTTTTTTTN) show a composition bias toward low complexity. The span at 188-206 (SEDDDCCYETEEDDNGEDG) shows a compositional bias: acidic residues. Residues 237-247 (RSAFKKNKKDY) are compositionally biased toward basic residues. Residues 273-283 (QLHYSNSMTDN) show a composition bias toward polar residues. 2 stretches are compositionally biased toward low complexity: residues 318–335 (SNSNNNNNNNNNNNNNNN) and 379–399 (PSPTLGSSCGSSSPGLNNSGN). The GATA-type zinc finger occupies 479–504 (CRHCGTTDTPEWRRGPDGRKSLCNAC).

This is GATA zinc finger domain-containing protein 9 (gtaI) from Dictyostelium discoideum (Social amoeba).